The primary structure comprises 607 residues: Dolichyl-diphosphooligosaccharide--protein glycosyltransferase subunit 1 (607 aa).

The signal sequence occupies residues Met1–Ala24. Over Ser25–Leu434 the chain is Lumenal. Residue Lys187 is modified to N6-acetyllysine. A glycan (N-linked (GlcNAc...) asparagine) is linked at Asn299. A helical membrane pass occupies residues Met435 to Ile455. The Cytoplasmic portion of the chain corresponds to Tyr456–Leu607. Residue Lys538 is modified to N6-acetyllysine; alternate. Residue Lys538 forms a Glycyl lysine isopeptide (Lys-Gly) (interchain with G-Cter in SUMO2); alternate linkage.

It belongs to the OST1 family. As to quaternary structure, component of the oligosaccharyltransferase (OST) complex. OST exists in two different complex forms which contain common core subunits RPN1, RPN2, OST48, OST4, DAD1 and TMEM258, either STT3A or STT3B as catalytic subunits, and form-specific accessory subunits. STT3A complex assembly occurs through the formation of 3 subcomplexes. Subcomplex 1 contains RPN1 and TMEM258, subcomplex 2 contains the STT3A-specific subunits STT3A, DC2/OSTC, and KCP2 as well as the core subunit OST4, and subcomplex 3 contains RPN2, DAD1, and OST48. The STT3A complex can form stable complexes with the Sec61 complex or with both the Sec61 and TRAP complexes. Interacts with TMEM35A/NACHO. Post-translationally, ubiquitinated by the ECS(ASB11) complex. Ufmylated by UFL1 in response to endoplasmic reticulum stress, promoting reticulophagy of endoplasmic reticulum sheets.

The protein resides in the endoplasmic reticulum membrane. The protein operates within protein modification; protein glycosylation. Functionally, subunit of the oligosaccharyl transferase (OST) complex that catalyzes the initial transfer of a defined glycan (Glc(3)Man(9)GlcNAc(2) in eukaryotes) from the lipid carrier dolichol-pyrophosphate to an asparagine residue within an Asn-X-Ser/Thr consensus motif in nascent polypeptide chains, the first step in protein N-glycosylation. N-glycosylation occurs cotranslationally and the complex associates with the Sec61 complex at the channel-forming translocon complex that mediates protein translocation across the endoplasmic reticulum (ER). All subunits are required for a maximal enzyme activity. This chain is Dolichyl-diphosphooligosaccharide--protein glycosyltransferase subunit 1, found in Canis lupus familiaris (Dog).